A 422-amino-acid polypeptide reads, in one-letter code: Testin (422 aa).

One can recognise a PET domain in the interval 92-199 (MILTSPVAAK…GDVKLPKEVE (108 aa)). The interval 135-165 (QPVAGSEGAQYRKKQLAKQLPAHDQDPSKCH) is disordered. Positions 155-165 (PAHDQDPSKCH) are enriched in basic and acidic residues. 3 consecutive LIM zinc-binding domains span residues 234 to 299 (YYCF…SEKP), 300 to 359 (RCAG…NHAV), and 360 to 422 (SCQG…KMSS).

It belongs to the prickle / espinas / testin family.

Its subcellular location is the cytoplasm. The protein localises to the cell cortex. It localises to the cell junction. The protein resides in the focal adhesion. Functionally, scaffold protein that may play a role in cell adhesion, cell spreading and in the reorganization of the actin cytoskeleton. May inhibit cell growth. Regulates cranial neural crest migration. Acts together with prickle1 to control axial elongation. The chain is Testin from Xenopus tropicalis (Western clawed frog).